The primary structure comprises 335 residues: Cell division protein ZipA (335 aa).

Over Met1–Leu6 the chain is Periplasmic. A helical transmembrane segment spans residues Val7 to Ile27. Over Arg28–Met335 the chain is Cytoplasmic. 2 disordered regions span residues Glu37 to Val128 and Arg163 to Glu185. Residues Ala170–Glu185 show a composition bias toward low complexity.

This sequence belongs to the ZipA family. In terms of assembly, interacts with FtsZ via their C-terminal domains.

Its subcellular location is the cell inner membrane. In terms of biological role, essential cell division protein that stabilizes the FtsZ protofilaments by cross-linking them and that serves as a cytoplasmic membrane anchor for the Z ring. Also required for the recruitment to the septal ring of downstream cell division proteins. This is Cell division protein ZipA from Shewanella loihica (strain ATCC BAA-1088 / PV-4).